Consider the following 505-residue polypeptide: ATP synthase subunit alpha, chloroplastic (505 aa).

Residue 170-177 (GDRQTGKT) coordinates ATP.

It belongs to the ATPase alpha/beta chains family. F-type ATPases have 2 components, CF(1) - the catalytic core - and CF(0) - the membrane proton channel. CF(1) has five subunits: alpha(3), beta(3), gamma(1), delta(1), epsilon(1). CF(0) has four main subunits: a, b, b' and c.

The protein resides in the plastid. It is found in the chloroplast thylakoid membrane. It carries out the reaction ATP + H2O + 4 H(+)(in) = ADP + phosphate + 5 H(+)(out). Functionally, produces ATP from ADP in the presence of a proton gradient across the membrane. The alpha chain is a regulatory subunit. This chain is ATP synthase subunit alpha, chloroplastic, found in Phaeodactylum tricornutum (strain CCAP 1055/1).